The primary structure comprises 24 residues: Brevinin-1R (24 aa).

Cys18 and Cys24 are disulfide-bonded.

In terms of tissue distribution, expressed by the skin glands.

It is found in the secreted. Functionally, antimicrobial peptide. In Pelophylax ridibundus (Marsh frog), this protein is Brevinin-1R.